Consider the following 83-residue polypeptide: Cytochrome b559 subunit alpha (83 aa).

Residues 21–35 form a helical membrane-spanning segment; sequence VIHSITIPSLFIAGW. A heme-binding site is contributed by His-23.

It belongs to the PsbE/PsbF family. Heterodimer of an alpha subunit and a beta subunit. PSII is composed of 1 copy each of membrane proteins PsbA, PsbB, PsbC, PsbD, PsbE, PsbF, PsbH, PsbI, PsbJ, PsbK, PsbL, PsbM, PsbT, PsbX, PsbY, PsbZ, Psb30/Ycf12, at least 3 peripheral proteins of the oxygen-evolving complex and a large number of cofactors. It forms dimeric complexes. Heme b is required as a cofactor.

It localises to the plastid. The protein resides in the chloroplast thylakoid membrane. Functionally, this b-type cytochrome is tightly associated with the reaction center of photosystem II (PSII). PSII is a light-driven water:plastoquinone oxidoreductase that uses light energy to abstract electrons from H(2)O, generating O(2) and a proton gradient subsequently used for ATP formation. It consists of a core antenna complex that captures photons, and an electron transfer chain that converts photonic excitation into a charge separation. The sequence is that of Cytochrome b559 subunit alpha from Daucus carota (Wild carrot).